Consider the following 1470-residue polypeptide: MSKTLKKKKHWLSKVQECAVSWAGPPGDLGAEIRGGAERGEFPYLGRLRDEPGGGGGTCCVVSGKAPSPGDVLLEVNGTPVSGLTNRDTLAVIRHFREPIRLKTVKPGKVINKDLRHYLSLQFQKGSIDHKLQQVIRDNLYLITIPCTTRAPRDGEVPGVDYNFISVEQFKALEESGALLESGTYDGNFYGTPKPPAEPSPFQPDPVDQVLFDNEFDTESQRKRTTSVSKMERMDSSLPEEEEDEDKEAVNGSGSMETREMHSESSDCWMKTVPSYNQTNRSMDFRNYMMRDENLEPLPKNWEMAYTDTGTIYFIDHNTKTTTWLDPRLCKKAKAPEDCEDGELPYGWEKIEDPQYGTYYVDHLNQKTQFENPVEEAKRKKQIGQAETHSAKTDVERAHFTRDPSQLKGVLVRASLKKSTMGFGFTIIGGDRPDEFLQVKNVLKDGPAAQDGKMAPGDVIVDINGNCVLGHTHADVVQMFQLVPVNQYVNLTLCRGYALPDDSEDPVVDIVAATPVINGQSLAKGEACMSTQDFKLGAMVLDQNGKSGKLLSSDRLNGPSDSNEQRASLASSGSSQPELVTIPLVKGPKGFGFAIADSPTGQKVKMILDSQWCQGLQKGDIIKEIYHQNVQNLTHLQVVEVLKQFPVGADVPLLILRGGPCSPTKTAKMKTDTKETSGSLETINEPTPQPMPFPPSIIRSGSPKLDPSEVYLKSKTLYEDKPPNTKDLDVFLRKQESGFGFRVLGGDGPDQSIYIGAIIPLGAAEKDGRLRAADELMCIDGIPVKGKSHKQVLDLMTTAARNGHVLLTVRRKIFYGEKQPEDESPQAFSQSGSPRLNRTELPTRSAPQESYDVILQRKENEGFGFVILTSKSKPPPGVIPHKIGRVIDGSPADRCGRLKVGDHISAVNGQSIVDLSHDNIVQLIKDAGVTVTLTVVAEEEHHGPPSGTNSARQSPALQHRPMGQAQATHIPGDRTALEGEVGKDVCSSYRHSWSDHKHLAQPDTAVISVVGSRHSQSLGCYPVELERGPRGFGFSLRGGKEYNMGLFILRLAEDGPAIKDGRIHVGDQIVEINGEPTQGITHTRAIELIQAGGNKVLLLLRPGTGLIPDHGDWDIYSPSSSNVIYDEQPPPLPSSHSAATFEESHVPVTEDSLIRVQTCEKAEELKDTVQEKKSTLNGSQPEMKYQSIQKNVSKKDPSRSHGHGDKNLLKGENGVTRRGRSASPKKSVNRHSEEHLEKIPRPLRSDPKGKSRDRSLSPRKGENKGQVTIKAGSGQDPCRKDRGRSSSPRKQQKIGGNSLSNTEGKLSEAGSRRAAGLSSDSPEQLPEGKEKSGVSRKDLKLSQLGKNRTRSPEKRSSKVDEASLPSKKTSDTASRVVSEKEKGRKPGTGERSRDKTGESVQTSAKPLTQEAGEKMALSKASEVTDRGKERAGGAPESSSPVKKAPITPGPWRVPRANKVTGTAGMADKQL.

Positions 18–108 constitute a PDZ 1 domain; that stretch reads CAVSWAGPPG…PIRLKTVKPG (91 aa). The interaction with ADRB1 and TGFA stretch occupies residues 18 to 108; that stretch reads CAVSWAGPPG…PIRLKTVKPG (91 aa). The Guanylate kinase-like domain maps to 116 to 290; it reads RHYLSLQFQK…RSMDFRNYMM (175 aa). 123–130 is an ATP binding site; that stretch reads FQKGSIDH. A disordered region spans residues 184–266; the sequence is TYDGNFYGTP…ETREMHSESS (83 aa). Positions 193–204 are enriched in pro residues; that stretch reads PKPPAEPSPFQP. S236 bears the Phosphoserine mark. The segment covering 238–247 has biased composition (acidic residues); sequence LPEEEEDEDK. WW domains lie at 296–329 and 342–375; these read EPLP…DPRL and GELP…NPVE. A PDZ 2 domain is found at 413–495; sequence RASLKKSTMG…NQYVNLTLCR (83 aa). Residues 413-495 are interaction with PTEN; that stretch reads RASLKKSTMG…NQYVNLTLCR (83 aa). The disordered stretch occupies residues 550 to 575; it reads LLSSDRLNGPSDSNEQRASLASSGSS. Positions 559–575 are enriched in polar residues; that stretch reads PSDSNEQRASLASSGSS. Residues 581 to 657 enclose the PDZ 3 domain; it reads TIPLVKGPKG…GADVPLLILR (77 aa). Phosphoserine is present on S598. Residues 665–700 are disordered; sequence KTAKMKTDTKETSGSLETINEPTPQPMPFPPSIIRS. Polar residues predominate over residues 676-686; it reads TSGSLETINEP. A Phosphoserine modification is found at S702. The PDZ 4 domain occupies 729 to 811; the sequence is DVFLRKQESG…NGHVLLTVRR (83 aa). Residues 729-811 form an interaction with ADGRB1 region; that stretch reads DVFLRKQESG…NGHVLLTVRR (83 aa). The tract at residues 818–847 is disordered; that stretch reads KQPEDESPQAFSQSGSPRLNRTELPTRSAP. The span at 826-847 shows a compositional bias: polar residues; it reads QAFSQSGSPRLNRTELPTRSAP. Phosphoserine is present on residues S833 and S916. The 88-residue stretch at 852-939 folds into the PDZ 5 domain; it reads DVILQRKENE…TVTLTVVAEE (88 aa). The interaction with LPAR2 and GRIN2B stretch occupies residues 852–939; that stretch reads DVILQRKENE…TVTLTVVAEE (88 aa). The tract at residues 939–976 is disordered; sequence EEHHGPPSGTNSARQSPALQHRPMGQAQATHIPGDRTA. The span at 946–956 shows a compositional bias: polar residues; the sequence is SGTNSARQSPA. The PDZ 6 domain occupies 1022–1104; it reads PVELERGPRG…KVLLLLRPGT (83 aa). Disordered regions lie at residues 1124 to 1146 and 1167 to 1470; these read IYDE…ESHV and DTVQ…DKQL. The span at 1175-1191 shows a compositional bias: polar residues; that stretch reads TLNGSQPEMKYQSIQKN. Basic and acidic residues-rich tracts occupy residues 1193-1209 and 1230-1263; these read SKKD…KNLL and RHSE…KGEN. The span at 1285–1304 shows a compositional bias: polar residues; that stretch reads SSSPRKQQKIGGNSLSNTEG. S1321 bears the Phosphoserine mark. Composition is skewed to basic and acidic residues over residues 1326 to 1340, 1350 to 1361, 1377 to 1397, and 1422 to 1431; these read PEGK…KDLK, RSPEKRSSKVDE, VSEK…DKTG, and EVTDRGKERA.

Belongs to the MAGUK family. Interacts with ADRB1, ADGRB1, LPAR2/EDG4, FZD4, FZD7, GRIN2B, TGFA and VANGL2. Interacts with PTEN. Interacts with ADRB1, PTPRB and unidentified tyrosine phosphorylated proteins. Interacts with DLL1. Interacts with PRRG4 (via cytoplasmic domain).

Its subcellular location is the cell membrane. It is found in the cell junction. The protein resides in the tight junction. The protein localises to the nucleus. In terms of biological role, acts as a scaffolding protein at cell-cell junctions, thereby regulating various cellular and signaling processes. Cooperates with PTEN to modulate the kinase activity of AKT1. Its interaction with PTPRB and tyrosine phosphorylated proteins suggests that it may link receptor tyrosine phosphatase with its substrates at the plasma membrane. In polarized epithelial cells, involved in efficient trafficking of TGFA to the cell surface. Regulates the ability of LPAR2 to activate ERK and RhoA pathways. Regulates the JNK signaling cascade via its interaction with FZD4 and VANGL2. In Rattus norvegicus (Rat), this protein is Membrane-associated guanylate kinase, WW and PDZ domain-containing protein 3 (Magi3).